A 462-amino-acid chain; its full sequence is Na(+)/H(+) antiporter NhaA (462 aa).

The next 11 membrane-spanning stretches (helical) occupy residues 24–44, 66–86, 102–122, 156–176, 196–216, 235–255, 256–275, 290–310, 312–332, 361–381, and 392–412; these read ISGLIMLGFALAGLVLANLPL, LPIGHWAQDGLLTIFFLTVGL, AAAVPMLCAVGGMITPPILFL, GWAVPTATDIAFSLAVLALFA, LLAIILIAVFFSSVNAWYWFI, PWIAVGVVGILAWIMMFEAGI, HPTLAGVLVGLLTPARVMHG, PFSALLALPIFALFATGVHFE, MSPLLLLSPLVIALIVALVVG, MIPAAVACGIGFTVSFLIASL, and ARFGVLVASLIAAAISGVLLS.

It belongs to the NhaA Na(+)/H(+) (TC 2.A.33) antiporter family.

The protein resides in the cell membrane. The catalysed reaction is Na(+)(in) + 2 H(+)(out) = Na(+)(out) + 2 H(+)(in). Its function is as follows. Na(+)/H(+) antiporter that extrudes sodium in exchange for external protons. The sequence is that of Na(+)/H(+) antiporter NhaA from Bifidobacterium breve (strain NCIMB 8807 / UCC2003).